The sequence spans 45 residues: uncharacterized protein (45 aa).

This sequence belongs to the asfivirus C62L family.

This is an uncharacterized protein from Ornithodoros (relapsing fever ticks).